The primary structure comprises 251 residues: Phosphate import ATP-binding protein PstB 2 (251 aa).

In terms of domain architecture, ABC transporter spans 5–246 (LTTENLSLFY…PVKQETNDYI (242 aa)). ATP is bound at residue 37–44 (GPSGCGKS).

It belongs to the ABC transporter superfamily. Phosphate importer (TC 3.A.1.7) family. In terms of assembly, the complex is composed of two ATP-binding proteins (PstB), two transmembrane proteins (PstC and PstA) and a solute-binding protein (PstS).

Its subcellular location is the cell membrane. The catalysed reaction is phosphate(out) + ATP + H2O = ADP + 2 phosphate(in) + H(+). Functionally, part of the ABC transporter complex PstSACB involved in phosphate import. Responsible for energy coupling to the transport system. This is Phosphate import ATP-binding protein PstB 2 from Lactiplantibacillus plantarum (strain ATCC BAA-793 / NCIMB 8826 / WCFS1) (Lactobacillus plantarum).